The sequence spans 503 residues: 3-octaprenyl-4-hydroxybenzoate carboxy-lyase (503 aa).

Asn-176 contacts Mn(2+). Prenylated FMN contacts are provided by residues 179 to 181 (IYR), 193 to 195 (RWL), and 198 to 199 (RG). Glu-242 is a binding site for Mn(2+). Asp-303 functions as the Proton donor in the catalytic mechanism.

It belongs to the UbiD family. Homohexamer. Prenylated FMN serves as cofactor. Requires Mn(2+) as cofactor.

The protein localises to the cell membrane. It carries out the reaction a 4-hydroxy-3-(all-trans-polyprenyl)benzoate + H(+) = a 2-(all-trans-polyprenyl)phenol + CO2. It participates in cofactor biosynthesis; ubiquinone biosynthesis. Its function is as follows. Catalyzes the decarboxylation of 3-octaprenyl-4-hydroxy benzoate to 2-octaprenylphenol, an intermediate step in ubiquinone biosynthesis. The sequence is that of 3-octaprenyl-4-hydroxybenzoate carboxy-lyase from Ralstonia nicotianae (strain ATCC BAA-1114 / GMI1000) (Ralstonia solanacearum).